A 426-amino-acid chain; its full sequence is DNA polymerase processivity factor component OPG148 (426 aa).

It belongs to the orthopoxvirus OPG148 family. As to quaternary structure, interacts with the DNA polymerase catalytic subunit OPG071. Interacts with UDG/OPG116. Component of the uracil-DNA glycosylase(UDG)-OPG148-polymerase complex; OPG148 and UDG form a heterodimeric processivity factor that associates with OPG071 to form the processive polymerase holoenzyme. Interacts with OPG117.

Plays an essential role in viral DNA replication by acting as the polymerase processivity factor together with protein OPG116. Serves as a bridge which links the DNA polymerase OPG071 and the uracil DNA glycosylase. The chain is DNA polymerase processivity factor component OPG148 (OPG148) from Variola virus (isolate Human/India/Ind3/1967) (VARV).